Reading from the N-terminus, the 144-residue chain is Large ribosomal subunit protein uL13 (144 aa).

Belongs to the universal ribosomal protein uL13 family. Part of the 50S ribosomal subunit.

Its function is as follows. This protein is one of the early assembly proteins of the 50S ribosomal subunit, although it is not seen to bind rRNA by itself. It is important during the early stages of 50S assembly. This chain is Large ribosomal subunit protein uL13, found in Nitratidesulfovibrio vulgaris (strain ATCC 29579 / DSM 644 / CCUG 34227 / NCIMB 8303 / VKM B-1760 / Hildenborough) (Desulfovibrio vulgaris).